We begin with the raw amino-acid sequence, 1600 residues long: A disintegrin and metalloproteinase with thrombospondin motifs 12 (1600 aa).

The N-terminal stretch at 1-25 (MPCARGSWLAKLSIVAQLINFGAFC) is a signal peptide. Positions 26–244 (HGRQTQPWPV…TLRSRSLSRR (219 aa)) are excised as a propeptide. N-linked (GlcNAc...) asparagine glycosylation occurs at Asn-105. The Cysteine switch motif lies at 210–217 (PICGLKDS). Position 212 (Cys-212) interacts with Zn(2+). Residues 250–460 (RWVETLVVAD…GRGFCLDDIP (211 aa)) form the Peptidase M12B domain. Cystine bridges form between Cys-326/Cys-380, Cys-355/Cys-362, Cys-374/Cys-455, Cys-413/Cys-439, Cys-482/Cys-505, Cys-493/Cys-511, Cys-500/Cys-530, Cys-524/Cys-535, Cys-558/Cys-595, Cys-562/Cys-600, and Cys-573/Cys-585. His-396 is a Zn(2+) binding site. Residue Glu-397 is part of the active site. Residues His-400 and His-406 each coordinate Zn(2+). In terms of domain architecture, Disintegrin spans 469 to 548 (VIAPGVIYDV…GKKPESIPGG (80 aa)). 4 consecutive TSP type-1 domains span residues 546–601 (PGGW…HPCR), 827–887 (KLLY…KDCP), 891–947 (WAGE…RDIL), and 948–1001 (CPSD…QQCP). The segment at 705–831 (CQTVKKLFRQ…DNDVEKLLYF (127 aa)) is spacer 1. Residues 1001–1321 (PFSRRVLKPN…HLMKDHSPAY (321 aa)) are spacer 2. Disordered stretches follow at residues 1006-1140 (VLKP…LSSS) and 1158-1179 (PEVEIHSGSGEDSDQPLNKDKS). Residues 1038–1047 (PTPLSTPTVP) are compositionally biased toward low complexity. The span at 1048-1107 (ESMSTSTPTINSLGSTIASQEDANGMGWQNNSTQAEEGSHFPTSSGSTSQVPVTSWSLSI) shows a compositional bias: polar residues. The span at 1130–1140 (TTTSDSGLSSS) shows a compositional bias: low complexity. TSP type-1 domains are found at residues 1318 to 1371 (SPAY…RPCA), 1373 to 1428 (WRVG…CNLE), 1429 to 1477 (PCGE…NRHL), and 1478 to 1538 (CCHW…QACR). The PLAC domain maps to 1541–1581 (ADLTCLKDRLSISFCQTLKSMRKCSVPSVRAQCCLSCPQAP).

Interacts with COMP. The cofactor is Zn(2+). In terms of processing, the precursor is cleaved by a furin endopeptidase. Post-translationally, subjected to an intracellular maturation process yielding a 120 kDa N-terminal fragment containing the metalloproteinase, disintegrin, one TSP type-1 and the Cys-rich domains and a 83 kDa C-terminal fragment containing the spacer 2 and four TSP type-1 domains. Glycosylated. Can be O-fucosylated by POFUT2 on a serine or a threonine residue found within the consensus sequence C1-X(2)-(S/T)-C2-G of the TSP type-1 repeat domains where C1 and C2 are the first and second cysteine residue of the repeat, respectively. Fucosylated repeats can then be further glycosylated by the addition of a beta-1,3-glucose residue by the glucosyltransferase, B3GALTL. Fucosylation mediates the efficient secretion of ADAMTS family members. Can also be C-glycosylated with one or two mannose molecules on tryptophan residues within the consensus sequence W-X-X-W of the TPRs, and N-glycosylated. These other glycosylations can also facilitate secretion.

It is found in the secreted. The protein localises to the extracellular space. It localises to the extracellular matrix. Inhibited by alpha-2 macroglobulin. Metalloprotease that plays a role in the degradation of COMP. Also cleaves alpha-2 macroglobulin and aggregan. Has anti-tumorigenic properties. The polypeptide is A disintegrin and metalloproteinase with thrombospondin motifs 12 (Adamts12) (Mus musculus (Mouse)).